The sequence spans 433 residues: 3-phosphoshikimate 1-carboxyvinyltransferase (433 aa).

3-phosphoshikimate-binding residues include Lys21, Ser22, and Arg26. Lys21 provides a ligand contact to phosphoenolpyruvate. The phosphoenolpyruvate site is built by Gly96 and Arg124. 3-phosphoshikimate contacts are provided by Ser167, Ser168, Gln169, Ser195, Asp310, and Lys337. Gln169 is a phosphoenolpyruvate binding site. The Proton acceptor role is filled by Asp310. 3 residues coordinate phosphoenolpyruvate: Arg341, Arg384, and Lys410.

It belongs to the EPSP synthase family. In terms of assembly, monomer.

It is found in the cytoplasm. It catalyses the reaction 3-phosphoshikimate + phosphoenolpyruvate = 5-O-(1-carboxyvinyl)-3-phosphoshikimate + phosphate. Its pathway is metabolic intermediate biosynthesis; chorismate biosynthesis; chorismate from D-erythrose 4-phosphate and phosphoenolpyruvate: step 6/7. Functionally, catalyzes the transfer of the enolpyruvyl moiety of phosphoenolpyruvate (PEP) to the 5-hydroxyl of shikimate-3-phosphate (S3P) to produce enolpyruvyl shikimate-3-phosphate and inorganic phosphate. The sequence is that of 3-phosphoshikimate 1-carboxyvinyltransferase from Clostridium botulinum (strain Eklund 17B / Type B).